A 234-amino-acid polypeptide reads, in one-letter code: Phosphoribosylaminoimidazole-succinocarboxamide synthase (234 aa).

This sequence belongs to the SAICAR synthetase family.

The catalysed reaction is 5-amino-1-(5-phospho-D-ribosyl)imidazole-4-carboxylate + L-aspartate + ATP = (2S)-2-[5-amino-1-(5-phospho-beta-D-ribosyl)imidazole-4-carboxamido]succinate + ADP + phosphate + 2 H(+). It participates in purine metabolism; IMP biosynthesis via de novo pathway; 5-amino-1-(5-phospho-D-ribosyl)imidazole-4-carboxamide from 5-amino-1-(5-phospho-D-ribosyl)imidazole-4-carboxylate: step 1/2. The protein is Phosphoribosylaminoimidazole-succinocarboxamide synthase of Pyrococcus furiosus (strain ATCC 43587 / DSM 3638 / JCM 8422 / Vc1).